Consider the following 310-residue polypeptide: Porphobilinogen deaminase (310 aa).

Position 243 is an S-(dipyrrolylmethanemethyl)cysteine (cysteine 243).

This sequence belongs to the HMBS family. As to quaternary structure, monomer. It depends on dipyrromethane as a cofactor.

It carries out the reaction 4 porphobilinogen + H2O = hydroxymethylbilane + 4 NH4(+). It participates in porphyrin-containing compound metabolism; protoporphyrin-IX biosynthesis; coproporphyrinogen-III from 5-aminolevulinate: step 2/4. Functionally, tetrapolymerization of the monopyrrole PBG into the hydroxymethylbilane pre-uroporphyrinogen in several discrete steps. The chain is Porphobilinogen deaminase from Methylobacillus flagellatus (strain ATCC 51484 / DSM 6875 / VKM B-1610 / KT).